We begin with the raw amino-acid sequence, 307 residues long: Zinc transporter ZIP9 (307 aa).

A helical membrane pass occupies residues F4–I24. A glycan (N-linked (GlcNAc...) asparagine) is linked at N29. Helical transmembrane passes span L35 to V55, A106 to G126, I146 to A166, L176 to F196, and H210 to S230. The N-linked (GlcNAc...) asparagine glycan is linked to N241. Helical transmembrane passes span G244 to P264 and L286 to Q306.

The protein belongs to the ZIP transporter (TC 2.A.5) family. In terms of tissue distribution, highly expressed in pancreas, testis, and pituitary and moderately in the kidney, liver, uterus, heart, prostate, and brain, whereas expression is lower in the ovary and colon.

The protein localises to the golgi apparatus. The protein resides in the trans-Golgi network membrane. It is found in the cell membrane. Its subcellular location is the cytoplasm. It localises to the perinuclear region. The protein localises to the mitochondrion. The protein resides in the nucleus. It catalyses the reaction Zn(2+)(in) = Zn(2+)(out). Transports zinc ions across cell and organelle membranes into the cytoplasm and regulates intracellular zinc homeostasis. Participates in the zinc ions efflux out of the secretory compartments. Regulates intracellular zinc level, resulting in the enhancement of AKT1 and MAPK3/MAPK1 (Erk1/2) phosphorylation in response to the BCR activation. Also functions as a membrane androgen receptor that mediates, through a G protein, the non-classical androgen signaling pathway, characterized by the activation of MAPK3/MAPK1 (Erk1/2) and transcription factors CREB1 or ATF1. This pathway contributes to CLDN1 and CLDN5 expression and tight junction formation between adjacent Sertoli cells. Mediates androgen-induced vascular endothelial cell proliferation through activation of an inhibitory G protein leading to the AKT1 and MAPK3/MAPK1 (Erk1/2) activation which in turn modulate inhibition (phosphorylation) of GSK3B and CCND1 transcription. Moreover, has dual functions as a membrane-bound androgen receptor and as an androgen-dependent zinc transporter both of which are mediated through an inhibitory G protein (Gi) that mediates both MAP kinase and zinc signaling leading to the androgen-dependent apoptotic process. In Homo sapiens (Human), this protein is Zinc transporter ZIP9.